A 184-amino-acid chain; its full sequence is Large ribosomal subunit protein uL6 (184 aa).

This sequence belongs to the universal ribosomal protein uL6 family. In terms of assembly, part of the 50S ribosomal subunit.

Its function is as follows. This protein binds to the 23S rRNA, and is important in its secondary structure. It is located near the subunit interface in the base of the L7/L12 stalk, and near the tRNA binding site of the peptidyltransferase center. In Aster yellows witches'-broom phytoplasma (strain AYWB), this protein is Large ribosomal subunit protein uL6.